A 182-amino-acid polypeptide reads, in one-letter code: MNLPDNFWNKVSEFEIILKQFNKIHSLTNYRDIKPVVEDSMKPLEFLDFNPKIVIDVGSGAGFPAIFLSLILNSSEFHLYEPIAKKSSFLSYVGAALNLKNITVHPSKIESCQKIKADLITSRALSKTLFLIEICRGFYDENTTFLLYKGDGAKEEISNLKCKNSIISSGKRNYLFLKGVKC.

S-adenosyl-L-methionine contacts are provided by residues G58, F63, 109-110 (IE), and R123.

This sequence belongs to the methyltransferase superfamily. RNA methyltransferase RsmG family.

It localises to the cytoplasm. The catalysed reaction is guanosine(527) in 16S rRNA + S-adenosyl-L-methionine = N(7)-methylguanosine(527) in 16S rRNA + S-adenosyl-L-homocysteine. Its function is as follows. Specifically methylates the N7 position of guanine in position 527 of 16S rRNA. This Campylobacter fetus subsp. fetus (strain 82-40) protein is Ribosomal RNA small subunit methyltransferase G.